The sequence spans 426 residues: Tektin-1 (426 aa).

Coiled-coil stretches lie at residues 21–84, 268–307, and 339–383; these read KNQY…LEQL, LKET…LDQE, and KEVG…ENTI. The tract at residues 396–426 is disordered; sequence SNPLRDGGDQGQWARACAPTPSAEDGTSHTD.

It belongs to the tektin family. In terms of assembly, microtubule inner protein component of sperm flagellar doublet microtubules. Ubiquitinated, leading to its degradation. Deubiquitinated by USP16, promoting its stability.

It localises to the cytoplasm. It is found in the cytoskeleton. Its subcellular location is the cilium axoneme. The protein resides in the flagellum axoneme. Its function is as follows. Microtubule inner protein (MIP) part of the dynein-decorated doublet microtubules (DMTs) in cilia and flagellar axoneme. Forms filamentous polymers in the walls of ciliary and flagellar microtubules. The protein is Tektin-1 (TEKT1) of Canis lupus familiaris (Dog).